A 144-amino-acid polypeptide reads, in one-letter code: uncharacterized protein (144 aa).

Positions 1–24 are disordered; the sequence is MGKVIQFPFGEEPEKKEEKELKTE. Residues 12–24 are compositionally biased toward basic and acidic residues; the sequence is EPEKKEEKELKTE.

This is an uncharacterized protein from Aquifex aeolicus (strain VF5).